The following is a 212-amino-acid chain: Large ribosomal subunit protein uL3 (212 aa).

A disordered region spans residues 134–154; that stretch reads RKTHGNSVSHRVPGSIGQNQT. The residue at position 153 (Q153) is an N5-methylglutamine.

Belongs to the universal ribosomal protein uL3 family. As to quaternary structure, part of the 50S ribosomal subunit. Forms a cluster with proteins L14 and L19. Methylated by PrmB.

In terms of biological role, one of the primary rRNA binding proteins, it binds directly near the 3'-end of the 23S rRNA, where it nucleates assembly of the 50S subunit. This Dichelobacter nodosus (strain VCS1703A) protein is Large ribosomal subunit protein uL3.